Reading from the N-terminus, the 407-residue chain is Probable tRNA sulfurtransferase (407 aa).

The 105-residue stretch at 61–165 (NEITYRLSKI…LDAIYMYEEV (105 aa)) folds into the THUMP domain. ATP contacts are provided by residues 183–184 (ML), 208–209 (HF), Arg265, Gly287, and Gln296.

It belongs to the ThiI family.

The protein localises to the cytoplasm. It carries out the reaction [ThiI sulfur-carrier protein]-S-sulfanyl-L-cysteine + a uridine in tRNA + 2 reduced [2Fe-2S]-[ferredoxin] + ATP + H(+) = [ThiI sulfur-carrier protein]-L-cysteine + a 4-thiouridine in tRNA + 2 oxidized [2Fe-2S]-[ferredoxin] + AMP + diphosphate. It catalyses the reaction [ThiS sulfur-carrier protein]-C-terminal Gly-Gly-AMP + S-sulfanyl-L-cysteinyl-[cysteine desulfurase] + AH2 = [ThiS sulfur-carrier protein]-C-terminal-Gly-aminoethanethioate + L-cysteinyl-[cysteine desulfurase] + A + AMP + 2 H(+). It functions in the pathway cofactor biosynthesis; thiamine diphosphate biosynthesis. Functionally, catalyzes the ATP-dependent transfer of a sulfur to tRNA to produce 4-thiouridine in position 8 of tRNAs, which functions as a near-UV photosensor. Also catalyzes the transfer of sulfur to the sulfur carrier protein ThiS, forming ThiS-thiocarboxylate. This is a step in the synthesis of thiazole, in the thiamine biosynthesis pathway. The sulfur is donated as persulfide by IscS. The polypeptide is Probable tRNA sulfurtransferase (Staphylococcus aureus (strain N315)).